The chain runs to 191 residues: Fe/S biogenesis protein NfuA (191 aa).

The [4Fe-4S] cluster site is built by C149 and C152.

It belongs to the NfuA family. As to quaternary structure, homodimer. The cofactor is [4Fe-4S] cluster.

Functionally, involved in iron-sulfur cluster biogenesis. Binds a 4Fe-4S cluster, can transfer this cluster to apoproteins, and thereby intervenes in the maturation of Fe/S proteins. Could also act as a scaffold/chaperone for damaged Fe/S proteins. This Salmonella arizonae (strain ATCC BAA-731 / CDC346-86 / RSK2980) protein is Fe/S biogenesis protein NfuA.